A 124-amino-acid polypeptide reads, in one-letter code: Chorion class high-cysteine HCA protein 12 (124 aa).

Residues Met-1–Gly-21 form the signal peptide. The interval Gln-22–Gly-35 is left arm. The segment at Cys-36–Ile-83 is central domain. Positions Cys-84–Cys-124 are right arm (Gly- and Cys-rich tandem repeats).

The protein belongs to the chorion protein family.

Functionally, this protein is one of many from the eggshell of the silk moth. The chain is Chorion class high-cysteine HCA protein 12 from Bombyx mori (Silk moth).